Here is a 232-residue protein sequence, read N- to C-terminus: Ubiquinone biosynthesis O-methyltransferase (232 aa).

S-adenosyl-L-methionine is bound by residues R36, G55, D76, and L120.

Belongs to the methyltransferase superfamily. UbiG/COQ3 family.

It carries out the reaction a 3-demethylubiquinol + S-adenosyl-L-methionine = a ubiquinol + S-adenosyl-L-homocysteine + H(+). The catalysed reaction is a 3-(all-trans-polyprenyl)benzene-1,2-diol + S-adenosyl-L-methionine = a 2-methoxy-6-(all-trans-polyprenyl)phenol + S-adenosyl-L-homocysteine + H(+). Its pathway is cofactor biosynthesis; ubiquinone biosynthesis. Its function is as follows. O-methyltransferase that catalyzes the 2 O-methylation steps in the ubiquinone biosynthetic pathway. This Pseudomonas aeruginosa (strain LESB58) protein is Ubiquinone biosynthesis O-methyltransferase.